The chain runs to 447 residues: Phosphoglucosamine mutase (447 aa).

Residue Ser102 is the Phosphoserine intermediate of the active site. Residues Ser102, Asp241, Asp243, and Asp245 each coordinate Mg(2+). Phosphoserine is present on Ser102.

It belongs to the phosphohexose mutase family. It depends on Mg(2+) as a cofactor. Post-translationally, activated by phosphorylation.

The enzyme catalyses alpha-D-glucosamine 1-phosphate = D-glucosamine 6-phosphate. Functionally, catalyzes the conversion of glucosamine-6-phosphate to glucosamine-1-phosphate. In Hamiltonella defensa subsp. Acyrthosiphon pisum (strain 5AT), this protein is Phosphoglucosamine mutase.